The following is a 353-amino-acid chain: Melanin-concentrating hormone receptor 1 (353 aa).

The interval 1–26 (MDLQTSLLSTGPNASNISDGQDNLTL) is disordered. The Extracellular portion of the chain corresponds to 1–45 (MDLQTSLLSTGPNASNISDGQDNLTLPGSPPRTGSVSYINIIMPS). N-linked (GlcNAc...) asparagine glycosylation is found at asparagine 13, asparagine 16, and asparagine 23. The chain crosses the membrane as a helical span at residues 46 to 66 (VFGTICLLGIVGNSTVIFAVV). Over 67–79 (KKSKLHWCSNVPD) the chain is Cytoplasmic. The chain crosses the membrane as a helical span at residues 80 to 100 (IFIINLSVVDLLFLLGMPFMI). Residues 101-116 (HQLMGNGVWHFGETMC) lie on the Extracellular side of the membrane. Cysteine 116 and cysteine 194 are disulfide-bonded. The chain crosses the membrane as a helical span at residues 117-139 (TLITAMDANSQFTSTYILTAMTI). Over 140 to 161 (DRYLATVHPISSTKFRKPSMAT) the chain is Cytoplasmic. The chain crosses the membrane as a helical span at residues 162 to 182 (LVICLLWALSFISITPVWLYA). Over 183-204 (RLIPFPGGAVGCGIRLPNPDTD) the chain is Extracellular. A helical transmembrane segment spans residues 205-225 (LYWFTLYQFFLAFALPFVVIT). The Cytoplasmic portion of the chain corresponds to 226-256 (AAYVKILQRMTSSVAPASQRSIRLRTKRVTR). A helical transmembrane segment spans residues 257–277 (TAIAICLVFFVCWAPYYVLQL). Topologically, residues 278-294 (TQLSISRPTLTFVYLYN) are extracellular. The helical transmembrane segment at 295-315 (AAISLGYANSCLNPFVYIVLC) threads the bilayer. Residues 316–353 (ETFRKRLVLSVKPAAQGQLRTVSNAQTADEERTESKGT) lie on the Cytoplasmic side of the membrane.

This sequence belongs to the G-protein coupled receptor 1 family. Interacts with NCDN. In terms of tissue distribution, high level in the brain, moderate amounts in the eye and skeletal muscle, and small amounts in tongue and pituitary.

Its subcellular location is the cell membrane. In terms of biological role, receptor for melanin-concentrating hormone, coupled to G proteins that inhibit adenylyl cyclase. The protein is Melanin-concentrating hormone receptor 1 of Rattus norvegicus (Rat).